The chain runs to 184 residues: Threonylcarbamoyl-AMP synthase (184 aa).

Residues 1-184 form the YrdC-like domain; it reads MNNLLAVIEL…IFTQHIFRQG (184 aa).

Belongs to the SUA5 family. TsaC subfamily.

The protein localises to the cytoplasm. It carries out the reaction L-threonine + hydrogencarbonate + ATP = L-threonylcarbamoyladenylate + diphosphate + H2O. Required for the formation of a threonylcarbamoyl group on adenosine at position 37 (t(6)A37) in tRNAs that read codons beginning with adenine. Catalyzes the conversion of L-threonine, HCO(3)(-)/CO(2) and ATP to give threonylcarbamoyl-AMP (TC-AMP) as the acyladenylate intermediate, with the release of diphosphate. In Haemophilus ducreyi (strain 35000HP / ATCC 700724), this protein is Threonylcarbamoyl-AMP synthase.